The sequence spans 231 residues: Cytochrome c oxidase assembly factor 7 (231 aa).

Residue alanine 2 is modified to N-acetylalanine. Sel1-like repeat units follow at residues 34-66 (PDGCYRLVDYLEGIRKNFDEAAKVLKFNCEENQ), 68-104 (SDSCYKLGAYYVTGKGGLTQDLKAAARCFLMACEKPG), 108-146 (IAACHNVGLLAHDGQVNEDGQPDLGKARDYYTRACDGGY), 147-183 (TSSCFNLSAMFLQGAPGFPKDMDLACKYSMKACDLGH), and 184-219 (IWACANASRMYKLGDGVDKDEAKAEVLKNRAQQLHK).

This sequence belongs to the hcp beta-lactamase family. As to quaternary structure, interacts with CHCHD4/MIA40 through transient intermolecular disulfide bonds.

It localises to the mitochondrion intermembrane space. Functionally, required for assembly of mitochondrial respiratory chain complex I and complex IV. The protein is Cytochrome c oxidase assembly factor 7 (COA7) of Homo sapiens (Human).